The following is a 154-amino-acid chain: Transcriptional repressor NrdR (154 aa).

Positions 1-22 (MECPNCHKNASRVIDSRPSDEN) are disordered. The segment at 3 to 34 (CPNCHKNASRVIDSRPSDENRAIRRRRECENC) is a zinc-finger region. Residues 49–139 (LLVIKNDGTR…IYRQFKDVSG (91 aa)) enclose the ATP-cone domain.

This sequence belongs to the NrdR family. Zn(2+) is required as a cofactor.

Its function is as follows. Negatively regulates transcription of bacterial ribonucleotide reductase nrd genes and operons by binding to NrdR-boxes. The sequence is that of Transcriptional repressor NrdR from Lactobacillus gasseri (strain ATCC 33323 / DSM 20243 / BCRC 14619 / CIP 102991 / JCM 1131 / KCTC 3163 / NCIMB 11718 / NCTC 13722 / AM63).